The chain runs to 414 residues: Esterase FrsA (414 aa).

This sequence belongs to the FrsA family.

It catalyses the reaction a carboxylic ester + H2O = an alcohol + a carboxylate + H(+). Catalyzes the hydrolysis of esters. The protein is Esterase FrsA of Salmonella dublin (strain CT_02021853).